Consider the following 613-residue polypeptide: Dihydroxy-acid dehydratase (613 aa).

Asp81 provides a ligand contact to Mg(2+). Cys122 is a binding site for [2Fe-2S] cluster. Residues Asp123 and Lys124 each coordinate Mg(2+). The residue at position 124 (Lys124) is an N6-carboxylysine. Cys195 provides a ligand contact to [2Fe-2S] cluster. Glu491 is a binding site for Mg(2+). Ser517 functions as the Proton acceptor in the catalytic mechanism.

The protein belongs to the IlvD/Edd family. Homodimer. It depends on [2Fe-2S] cluster as a cofactor. Requires Mg(2+) as cofactor.

The catalysed reaction is (2R)-2,3-dihydroxy-3-methylbutanoate = 3-methyl-2-oxobutanoate + H2O. It carries out the reaction (2R,3R)-2,3-dihydroxy-3-methylpentanoate = (S)-3-methyl-2-oxopentanoate + H2O. It functions in the pathway amino-acid biosynthesis; L-isoleucine biosynthesis; L-isoleucine from 2-oxobutanoate: step 3/4. It participates in amino-acid biosynthesis; L-valine biosynthesis; L-valine from pyruvate: step 3/4. In terms of biological role, functions in the biosynthesis of branched-chain amino acids. Catalyzes the dehydration of (2R,3R)-2,3-dihydroxy-3-methylpentanoate (2,3-dihydroxy-3-methylvalerate) into 2-oxo-3-methylpentanoate (2-oxo-3-methylvalerate) and of (2R)-2,3-dihydroxy-3-methylbutanoate (2,3-dihydroxyisovalerate) into 2-oxo-3-methylbutanoate (2-oxoisovalerate), the penultimate precursor to L-isoleucine and L-valine, respectively. The sequence is that of Dihydroxy-acid dehydratase from Photobacterium profundum (strain SS9).